The chain runs to 897 residues: Probable basic-leucine zipper transcription factor R (897 aa).

Disordered stretches follow at residues Asp-38–Thr-88 and Tyr-128–Ser-198. Positions Asn-44–Asn-75 are enriched in low complexity. The segment covering Ile-76–Thr-88 has biased composition (polar residues). A coiled-coil region spans residues Gln-94–Asp-137. Over residues Tyr-128–Gln-140 the composition is skewed to low complexity. The span at Lys-141–Thr-157 shows a compositional bias: polar residues. Positions Asn-158 to Ser-198 are enriched in low complexity. 2 coiled-coil regions span residues Leu-228–Gln-258 and Gln-330–Gln-407. Positions Leu-461–Gln-516 are disordered. The span at Ile-484–Gln-505 shows a compositional bias: pro residues. The span at Gln-506–Gln-516 shows a compositional bias: low complexity. The bZIP domain occupies Glu-557 to Glu-620. Positions Lys-559–Lys-564 are basic motif. The interval Ile-569 to Leu-576 is leucine-zipper.

Belongs to the bZIP family.

Its subcellular location is the nucleus. Functionally, probable transcriptional regulator. The polypeptide is Probable basic-leucine zipper transcription factor R (bzpR) (Dictyostelium discoideum (Social amoeba)).